The following is a 220-amino-acid chain: MAKNRFNQHWLHDHINDPYVKMAQREGYRARAAYKLKEIDEQDKLIRPGQVIVDLGAAPGSWSQYARNKLAQGKKRDAVREGGIDGTIVALDMLPMEPIADVHFIQGDFREDEVLHQLEAVLEGRTVDLVISDMAPNLSGVASADAARIEHVCDLALEFAQNHLKPDGALLVKCFHGSGYSQIVEKFKQQFKVVAPRKPKASRDKSSETFILGRHLKHPR.

Positions 60, 62, 92, 108, and 133 each coordinate S-adenosyl-L-methionine. K173 acts as the Proton acceptor in catalysis.

This sequence belongs to the class I-like SAM-binding methyltransferase superfamily. RNA methyltransferase RlmE family.

It localises to the cytoplasm. The catalysed reaction is uridine(2552) in 23S rRNA + S-adenosyl-L-methionine = 2'-O-methyluridine(2552) in 23S rRNA + S-adenosyl-L-homocysteine + H(+). In terms of biological role, specifically methylates the uridine in position 2552 of 23S rRNA at the 2'-O position of the ribose in the fully assembled 50S ribosomal subunit. The chain is Ribosomal RNA large subunit methyltransferase E from Burkholderia multivorans (strain ATCC 17616 / 249).